A 457-amino-acid polypeptide reads, in one-letter code: Putative zinc finger CCCH domain-containing protein 21 (457 aa).

Disordered stretches follow at residues 51–73, 102–130, 195–221, and 280–329; these read PTSS…ARAS, LESP…EKLL, TSPS…ERER, and RKQA…RLRV. Residues 57-66 are compositionally biased toward gly residues; it reads DGGGGGGGGY. The stretch at 215 to 276 forms a coiled coil; the sequence is ASAEREREVR…HLSLLLEELE (62 aa). C3H1-type zinc fingers lie at residues 382-409 and 419-447; these read AAKT…HGLQ and RYKT…HSPL.

In Oryza sativa subsp. japonica (Rice), this protein is Putative zinc finger CCCH domain-containing protein 21.